Consider the following 224-residue polypeptide: Deoxyguanosine kinase (224 aa).

ATP is bound at residue 8–16; the sequence is GPIGAGKSS. Residues Glu-32, Tyr-44, and Gln-55 each contribute to the substrate site. Asp-78 (proton acceptor) is an active-site residue. Residues Arg-79, Asp-84, and Glu-149 each contribute to the substrate site.

Belongs to the DCK/DGK family. As to quaternary structure, heterodimer of a deoxyadenosine (DAK) and a deoxyguanosine kinase (DGK).

The enzyme catalyses 2'-deoxyguanosine + ATP = dGMP + ADP + H(+). DGK/DAK plays an essential role in generating the deoxyribonucleotide precursors, dGTP and dATP, for DNA metabolism. The sequence is that of Deoxyguanosine kinase from Lactobacillus johnsonii (strain CNCM I-12250 / La1 / NCC 533).